We begin with the raw amino-acid sequence, 645 residues long: Glucans biosynthesis glucosyltransferase H (645 aa).

Residues 1 to 12 show a composition bias toward polar residues; it reads MDGTVTLSSTPT. Residues 1-22 form a disordered region; that stretch reads MDGTVTLSSTPTAIPPVSALDA. 7 helical membrane-spanning segments follow: residues 64 to 84, 98 to 118, 423 to 443, 465 to 485, 504 to 524, 559 to 579, and 580 to 600; these read LIGG…SVLW, LFTL…AGFV, APMW…GVGI, AIWI…LGYI, AVSI…VMYL, YGGL…VSPA, and LAAW…VVAL.

It belongs to the glycosyltransferase 2 family. OpgH subfamily.

It is found in the cell inner membrane. The protein operates within glycan metabolism; osmoregulated periplasmic glucan (OPG) biosynthesis. In terms of biological role, involved in the biosynthesis of osmoregulated periplasmic glucans (OPGs). The protein is Glucans biosynthesis glucosyltransferase H of Xanthomonas oryzae pv. oryzae (strain MAFF 311018).